Here is a 576-residue protein sequence, read N- to C-terminus: MAGUK p55 subfamily member 2 (576 aa).

2 L27 domains span residues 8–60 (SETA…FMQQ) and 84–142 (LEAV…YETP). S42 carries the post-translational modification Phosphoserine. Residue T141 is modified to Phosphothreonine. Position 145 is a phosphoserine (S145). The 56-residue stretch at 185–240 (ELVIARILHGGMVAQQGLLHVGDIIKEVNGQPVGSDPRALQELLRNASGSVILKIL) folds into the PDZ domain. Positions 249 to 317 (PRQVFVKCHF…PSQLLEEKRK (69 aa)) constitute an SH3 domain. A Guanylate kinase-like domain is found at 374–561 (RKTLVLIGAQ…TFRELQTAME (188 aa)).

It belongs to the MAGUK family. In terms of assembly, can homomultimerise. Interacts with CACNG2. Interacts (via the SH3-Guanylate kinase-like sub-module) with DLG4/PSD95 and DLGAP1/GKAP. Interacts (via the PDZ domain) with CADM1 (via C-terminus). Interacts with KCNN2/SK2 (via N-terminal domain). Interacts with SRC. Post-translationally, phosphorylated by SRC.

It is found in the cytoplasm. It localises to the cytoskeleton. The protein resides in the membrane. The protein localises to the cell projection. Its subcellular location is the dendrite. It is found in the postsynaptic density. Functionally, postsynaptic MAGUK scaffold protein that links CADM1 cell adhesion molecules to core components of the postsynaptic density. In CA1 pyramidal neurons, required for synaptic KCNN2-containing channel function and long-term potentiation expression. Seems to negatively regulate SRC function in epithelial cells. The protein is MAGUK p55 subfamily member 2 of Homo sapiens (Human).